The following is a 350-amino-acid chain: Formimidoylglutamase (350 aa).

Mn(2+) contacts are provided by His130, Asp165, His167, Asp169, Asp269, and Asp271.

It belongs to the arginase family. The cofactor is Mn(2+).

The catalysed reaction is N-formimidoyl-L-glutamate + H2O = formamide + L-glutamate. The protein operates within amino-acid degradation; L-histidine degradation into L-glutamate; L-glutamate from N-formimidoyl-L-glutamate (hydrolase route): step 1/1. In terms of biological role, catalyzes the conversion of N-formimidoyl-L-glutamate to L-glutamate and formamide. The sequence is that of Formimidoylglutamase from Aliivibrio fischeri (strain ATCC 700601 / ES114) (Vibrio fischeri).